The following is a 125-amino-acid chain: Small ribosomal subunit protein uS13 (125 aa).

Belongs to the universal ribosomal protein uS13 family. In terms of assembly, part of the 30S ribosomal subunit. Forms a loose heterodimer with protein S19. Forms two bridges to the 50S subunit in the 70S ribosome.

In terms of biological role, located at the top of the head of the 30S subunit, it contacts several helices of the 16S rRNA. In the 70S ribosome it contacts the 23S rRNA (bridge B1a) and protein L5 of the 50S subunit (bridge B1b), connecting the 2 subunits; these bridges are implicated in subunit movement. Contacts the tRNAs in the A and P-sites. The protein is Small ribosomal subunit protein uS13 of Gluconacetobacter diazotrophicus (strain ATCC 49037 / DSM 5601 / CCUG 37298 / CIP 103539 / LMG 7603 / PAl5).